Reading from the N-terminus, the 341-residue chain is Methionine import ATP-binding protein MetN 1 (341 aa).

The 240-residue stretch at 2-241 (IEFKNVNKVF…PQTNTAKNFV (240 aa)) folds into the ABC transporter domain. An ATP-binding site is contributed by 38–45 (GYSGAGKS).

It belongs to the ABC transporter superfamily. Methionine importer (TC 3.A.1.24) family. As to quaternary structure, the complex is composed of two ATP-binding proteins (MetN), two transmembrane proteins (MetI) and a solute-binding protein (MetQ).

The protein resides in the cell membrane. It carries out the reaction L-methionine(out) + ATP + H2O = L-methionine(in) + ADP + phosphate + H(+). It catalyses the reaction D-methionine(out) + ATP + H2O = D-methionine(in) + ADP + phosphate + H(+). In terms of biological role, part of the ABC transporter complex MetNIQ involved in methionine import. Responsible for energy coupling to the transport system. In Staphylococcus epidermidis (strain ATCC 35984 / DSM 28319 / BCRC 17069 / CCUG 31568 / BM 3577 / RP62A), this protein is Methionine import ATP-binding protein MetN 1.